The sequence spans 860 residues: Linoleate 9S-lipoxygenase A (860 aa).

Residues 29–159 (NALDFTDLAG…RYKSDRIFFA (131 aa)) enclose the PLAT domain. The Lipoxygenase domain occupies 162–860 (PYLPSETPEL…GKGIPNSVSI (699 aa)). A disordered region spans residues 209–246 (PDQGKENVRTTLGGSADYPYPRRGRTGRPPTRTDPKSE). Fe cation-binding residues include His-521, His-526, His-712, Asn-716, and Ile-860.

It belongs to the lipoxygenase family. As to quaternary structure, monomer. The cofactor is Fe cation. Expressed in germinating seeds as well as in ripening fruit.

The protein localises to the cytoplasm. It carries out the reaction (9Z,12Z)-octadecadienoate + O2 = (9S)-hydroperoxy-(10E,12Z)-octadecadienoate. The protein operates within lipid metabolism; oxylipin biosynthesis. In terms of biological role, plant lipoxygenase may be involved in a number of diverse aspects of plant physiology including growth and development, pest resistance, and senescence or responses to wounding. It catalyzes the hydroperoxidation of lipids containing a cis,cis-1,4-pentadiene structure. This is Linoleate 9S-lipoxygenase A (LOX1.1) from Solanum lycopersicum (Tomato).